Reading from the N-terminus, the 164-residue chain is Peptidyl-prolyl cis-trans isomerase A (164 aa).

Met1 is subject to N-acetylmethionine. At Val2 the chain carries N-acetylvaline; in Peptidyl-prolyl cis-trans isomerase A, N-terminally processed. In terms of domain architecture, PPIase cyclophilin-type spans 7–163 (FFDISADGEP…KKITISDCGQ (157 aa)). Lys28 is subject to N6-acetyllysine; alternate. Lys28 is covalently cross-linked (Glycyl lysine isopeptide (Lys-Gly) (interchain with G-Cter in SUMO2); alternate). Residue Lys28 forms a Glycyl lysine isopeptide (Lys-Gly) (interchain with G-Cter in ubiquitin); alternate linkage. Lys44 carries the N6-acetyllysine modification. A Phosphoserine modification is found at Ser77. The residue at position 82 (Lys82) is an N6-acetyllysine; alternate. Residue Lys82 forms a Glycyl lysine isopeptide (Lys-Gly) (interchain with G-Cter in SUMO2); alternate linkage. Thr93 carries the phosphothreonine modification. Residue Asn108 is glycosylated (N-linked (GlcNAc...) asparagine). Lys125, Lys131, and Lys133 each carry N6-acetyllysine.

It belongs to the cyclophilin-type PPIase family. PPIase A subfamily. In terms of assembly, interacts with protein phosphatase PPP3CA/calcineurin A. Interacts with PRPF19 isoform 2 (via N-terminus). Interacts with isoform 2 of BSG/CD147. Interacts with FOXO1; the interaction promotes FOXO1 dephosphorylation, nuclear accumulation and transcriptional activity. Interacts with integrin ITGA2B:ITGB3; the interaction is ROS and peptidyl-prolyl cis-trans isomerase (PPIase) activity-dependent and is increased in the presence of thrombin. Interacts with MAP3K5. Interacts with TARDBP; the interaction is dependent on the RNA-binding activity of TARDBP and the PPIase activity of PPIA/CYPA and the acetylation of PPIA/CYPA at Lys-125 favors the interaction. Interacts with HNRNPA1, HNRNPA2B1, HNRNPC, RBMX, HNRNPK and HNRNPM. Acetylation at Lys-125 markedly inhibits catalysis of cis to trans isomerization. PPIA acetylation also antagonizes the immunosuppressive effects of cyclosporine by inhibiting the sequential steps of cyclosporine binding and calcineurin inhibition. Acetylation at Lys-125 favors the interaction with TARDBP.

The protein resides in the cytoplasm. The protein localises to the secreted. Its subcellular location is the nucleus. The enzyme catalyses [protein]-peptidylproline (omega=180) = [protein]-peptidylproline (omega=0). Its activity is regulated as follows. Binds cyclosporin A (CsA). CsA mediates some of its effects via an inhibitory action on PPIase. Its function is as follows. Catalyzes the cis-trans isomerization of proline imidic peptide bonds in oligopeptides. Exerts a strong chemotactic effect on leukocytes partly through activation of one of its membrane receptors BSG/CD147, initiating a signaling cascade that culminates in MAPK/ERK activation. Activates endothelial cells (ECs) in a proinflammatory manner by stimulating activation of NF-kappa-B and ERK, JNK and p38 MAP-kinases and by inducing expression of adhesion molecules including SELE and VCAM1. Induces apoptosis in ECs by promoting the FOXO1-dependent expression of CCL2 and BCL2L11 which are involved in EC chemotaxis and apoptosis. In response to oxidative stress, initiates proapoptotic and antiapoptotic signaling in ECs via activation of NF-kappa-B and AKT1 and up-regulation of antiapoptotic protein BCL2. Negatively regulates MAP3K5/ASK1 kinase activity, autophosphorylation and oxidative stress-induced apoptosis mediated by MAP3K5/ASK1. Necessary for the assembly of TARDBP in heterogeneous nuclear ribonucleoprotein (hnRNP) complexes and regulates TARDBP binding to RNA UG repeats and TARDBP-dependent expression of HDAC6, ATG7 and VCP which are involved in clearance of protein aggregates. Plays an important role in platelet activation and aggregation. Regulates calcium mobilization and integrin ITGA2B:ITGB3 bidirectional signaling via increased ROS production as well as by facilitating the interaction between integrin and the cell cytoskeleton. Binds heparan sulfate glycosaminoglycans. This chain is Peptidyl-prolyl cis-trans isomerase A (PPIA), found in Cricetulus griseus (Chinese hamster).